The following is a 374-amino-acid chain: Tomoregulin-2 (374 aa).

An N-terminal signal peptide occupies residues 1-40; it reads MVLWESPRQCSSWTLCEGFCWLLLLPVTLLIIARPVKLAA. Residues 41 to 320 lie on the Extracellular side of the membrane; the sequence is FPTSLSDCQT…VPGPVRFQYV (280 aa). The N-linked (GlcNAc...) asparagine glycan is linked to Asn55. 2 Kazal-like domains span residues 90–137 and 181–229; these read VCQF…SCAT and VCNI…RCQD. Disulfide bonds link Cys91–Cys121, Cys95–Cys114, Cys103–Cys135, Cys182–Cys213, Cys186–Cys206, and Cys195–Cys227. Residue Asn230 is glycosylated (N-linked (GlcNAc...) asparagine). Residues 261-301 enclose the EGF-like domain; that stretch reads HHIPCPEHYNGFCMHGKCEHSINMQEPSCRCDAGYTGQHCE. Disulfide bonds link Cys265/Cys278, Cys273/Cys289, and Cys291/Cys300. The segment at 303–320 is required for shedding; the sequence is KDYSVLYVVPGPVRFQYV. A helical transmembrane segment spans residues 321 to 341; sequence LIAAVIGTIQIAVICVVVLCI. At 342 to 374 the chain is on the cytoplasmic side; it reads TRKCPRSNRIHRQKQNTGHYSSDNTTRASTRLI. The interval 353-374 is disordered; sequence RQKQNTGHYSSDNTTRASTRLI. A compositionally biased stretch (polar residues) spans 356–374; the sequence is QNTGHYSSDNTTRASTRLI.

This sequence belongs to the tomoregulin family. O-glycosylated; contains chondroitin sulfate glycosaminoglycans. In terms of processing, a soluble form (TMEFF2-ECD) is produced by proteolytic shedding. This shedding can be induced by phorbol ester or pro-inflammatory cytokines such as TNFalpha, and is mediated by a metalloproteinase ADAM. As to expression, widely expressed in the brain. In the olfactory bulb expressed in mitral cell, granule, and glomerular layers. In the hippocampus expressed in hippocampal cornu ammonis, pyramidal layer, dentate gyrus, and substantia nigra pars compacta.

The protein resides in the membrane. May be a survival factor for hippocampal and mesencephalic neurons. The shedded form may up-regulate cell proliferation. The protein is Tomoregulin-2 (Tmeff2) of Mus musculus (Mouse).